The sequence spans 385 residues: WD repeat-containing protein 74 (385 aa).

WD repeat units follow at residues 40 to 80 (RREE…FQGQ), 83 to 122 (CPGG…TSSD), 128 to 168 (RVGP…EPVF), 179 to 220 (DLRV…RRPV), 224 to 266 (TYGE…GCLK), and 267 to 306 (GLAG…GLEH). At serine 214 the chain carries Phosphoserine. Lysine 311 carries the N6-methyllysine modification. A required for nucleolar and nuclear location region spans residues 320–385 (SGRDNWEDEP…KKKRPGSTSP (66 aa)). 2 disordered regions span residues 323 to 345 (DNWE…DTET) and 360 to 385 (LSGL…STSP). Phosphoserine is present on serine 361. The span at 372–385 (TRRRKKKRPGSTSP) shows a compositional bias: basic residues.

Isoform 1 interacts (through WDR repeats) with NVL; the interaction is independent of RNA or pre-60S ribosome particles. Isoform 2 does not interact with NVL. Interacts with MTREX; the interaction dissociation in a late stage of rRNA synthesis is required for appropriate maturation of pre-60S particles and depends on the ATPase activity of NVL.

It localises to the nucleus. The protein resides in the nucleolus. Its function is as follows. Regulatory protein of the MTREX-exosome complex involved in the synthesis of the 60S ribosomal subunit. Participates in an early cleavage of the pre-rRNA processing pathway in cooperation with NVL. Required for blastocyst formation, is necessary for RNA transcription, processing and/or stability during preimplantation development. The polypeptide is WD repeat-containing protein 74 (WDR74) (Homo sapiens (Human)).